The sequence spans 318 residues: Ribose-phosphate pyrophosphokinase 2 (318 aa).

96–101 contributes to the ATP binding site; the sequence is RQDKKD. Residues Asp128, His130, Asp139, and Asp143 each contribute to the Mg(2+) site. ATP is bound at residue His130. The segment at 212–227 is binding of phosphoribosylpyrophosphate; the sequence is KDRVAILVDDMADTCG.

It belongs to the ribose-phosphate pyrophosphokinase family. In terms of assembly, homodimer. The active form is probably a hexamer composed of 3 homodimers. Mg(2+) serves as cofactor.

It carries out the reaction D-ribose 5-phosphate + ATP = 5-phospho-alpha-D-ribose 1-diphosphate + AMP + H(+). Its pathway is metabolic intermediate biosynthesis; 5-phospho-alpha-D-ribose 1-diphosphate biosynthesis; 5-phospho-alpha-D-ribose 1-diphosphate from D-ribose 5-phosphate (route I): step 1/1. Its activity is regulated as follows. Activated by magnesium and inorganic phosphate. Competitively or non-competitively inhibited by ADP, 2,3-bisphosphoglyceride or GDP. Functionally, catalyzes the synthesis of phosphoribosylpyrophosphate (PRPP) that is essential for nucleotide synthesis. The polypeptide is Ribose-phosphate pyrophosphokinase 2 (PRPS2) (Homo sapiens (Human)).